The chain runs to 438 residues: GTPase Obg (438 aa).

The Obg domain maps to 6-164; the sequence is AEFVDRVKIF…RWLELELKIL (159 aa). Positions 165-335 constitute an OBG-type G domain; that stretch reads ADVGLVGYPN…LLDRVASIVR (171 aa). GTP is bound by residues 171 to 178, 196 to 200, 217 to 220, 287 to 290, and 316 to 318; these read GYPNVGKS, FTTLV, DIPG, NKID, and SAV. Mg(2+) is bound by residues Ser178 and Thr198. An OCT domain is found at 358–438; the sequence is VWRKLPERFE…IGNFEFEYRE (81 aa).

Belongs to the TRAFAC class OBG-HflX-like GTPase superfamily. OBG GTPase family. As to quaternary structure, monomer. It depends on Mg(2+) as a cofactor.

The protein localises to the cytoplasm. Functionally, an essential GTPase which binds GTP, GDP and possibly (p)ppGpp with moderate affinity, with high nucleotide exchange rates and a fairly low GTP hydrolysis rate. Plays a role in control of the cell cycle, stress response, ribosome biogenesis and in those bacteria that undergo differentiation, in morphogenesis control. The sequence is that of GTPase Obg from Thermotoga neapolitana (strain ATCC 49049 / DSM 4359 / NBRC 107923 / NS-E).